We begin with the raw amino-acid sequence, 356 residues long: Pyruvate dehydrogenase E1 component subunit beta, mitochondrial (356 aa).

A mitochondrion-targeting transit peptide spans 1 to 25 (MLSSILKKIQPSLLVNFRIITRTYA). Glutamate 85 lines the thiamine diphosphate pocket. K(+)-binding residues include isoleucine 138, alanine 186, isoleucine 187, aspartate 189, and asparagine 191.

As to quaternary structure, tetramer of 2 alpha and 2 beta subunits. It depends on thiamine diphosphate as a cofactor.

The protein localises to the mitochondrion matrix. The enzyme catalyses N(6)-[(R)-lipoyl]-L-lysyl-[protein] + pyruvate + H(+) = N(6)-[(R)-S(8)-acetyldihydrolipoyl]-L-lysyl-[protein] + CO2. Functionally, the pyruvate dehydrogenase complex catalyzes the overall conversion of pyruvate to acetyl-CoA and CO(2). It contains multiple copies of three enzymatic components: pyruvate dehydrogenase (E1), dihydrolipoamide acetyltransferase (E2) and lipoamide dehydrogenase (E3). The protein is Pyruvate dehydrogenase E1 component subunit beta, mitochondrial (pdhB) of Dictyostelium discoideum (Social amoeba).